We begin with the raw amino-acid sequence, 472 residues long: Eukaryotic translation initiation factor 2 subunit 3 (472 aa).

Position 2 is an N-acetylalanine (A2). Residue S16 is modified to Phosphoserine. Positions 39–248 (QATINIGTIG…IVKKIPVPPR (210 aa)) constitute a tr-type G domain. The tract at residues 48-55 (GHVAHGKS) is G1. 51–56 (AHGKST) contributes to the GTP binding site. Positions 76–80 (NITIK) are G2. A G3 region spans residues 134-137 (DCPG). Residues 190–193 (NKID) and 225–227 (SAQ) contribute to the GTP site. Residues 190–193 (NKID) are G4. Residues 225-227 (SAQ) are G5. The segment at 457–469 (GQIRRGVTIKPTV) is interacts with CDC123.

Belongs to the TRAFAC class translation factor GTPase superfamily. Classic translation factor GTPase family. EIF2G subfamily. Eukaryotic translation initiation factor 2 eIF2 is a heterotrimeric complex composed of an alpha (EIF2S1), a beta (EIF2S2) and a gamma (EIF2S3) chain. eIF2 is member of the 43S pre-initiation complex (43S PIC). Interacts (via C-terminus) with CDC123; the interaction is direct.

Its subcellular location is the cytoplasm. It is found in the cytosol. It carries out the reaction GTP + H2O = GDP + phosphate + H(+). Its function is as follows. Member of the eIF2 complex that functions in the early steps of protein synthesis by forming a ternary complex with GTP and initiator tRNA. This complex binds to a 40S ribosomal subunit, followed by mRNA binding to form the 43S pre-initiation complex (43S PIC). Junction of the 60S ribosomal subunit to form the 80S initiation complex is preceded by hydrolysis of the GTP bound to eIF2 and release of an eIF2-GDP binary complex. In order for eIF2 to recycle and catalyze another round of initiation, the GDP bound to eIF2 must exchange with GTP by way of a reaction catalyzed by eIF-2B. The protein is Eukaryotic translation initiation factor 2 subunit 3 (EIF2S3) of Pongo abelii (Sumatran orangutan).